Here is a 621-residue protein sequence, read N- to C-terminus: Phosphatidylinositol-3,5-bisphosphate 3-phosphatase MTMR6 (621 aa).

The region spanning 1 to 101 (MEHIRTTKVE…YNSLLQLSKQ (101 aa)) is the GRAM domain. The interaction with RAB1B stretch occupies residues 2 to 141 (EHIRTTKVEQ…EEYKRMGVPN (140 aa)). Y108 is subject to Phosphotyrosine. In terms of domain architecture, Myotubularin phosphatase spans 124-499 (GWQLIDLAEE…FNFKFWRNMY (376 aa)). A 1,2-diacyl-sn-glycero-3-phospho-(1D-myo-inositol-3,5-bisphosphate) contacts are provided by N248, N273, and I274. Residues N248, N273, and I274 each contribute to the a 1,2-diacyl-sn-glycero-3-phospho-(1D-myo-inositol-3-phosphate) site. C336 acts as the Phosphocysteine intermediate in catalysis. A 1,2-diacyl-sn-glycero-3-phospho-(1D-myo-inositol-3,5-bisphosphate) contacts are provided by S337, D338, G339, W340, D341, R342, K378, and R382. S337, D338, G339, W340, D341, and R342 together coordinate a 1,2-diacyl-sn-glycero-3-phospho-(1D-myo-inositol-3-phosphate). An a 1,2-diacyl-sn-glycero-3-phospho-(1D-myo-inositol-3-phosphate)-binding site is contributed by R382. Phosphoserine is present on residues S556, S561, S589, and S611.

This sequence belongs to the protein-tyrosine phosphatase family. Non-receptor class myotubularin subfamily. In terms of assembly, homodimer. Heterodimer (via C-terminus) with MTMR9 (via C-terminus). Interacts with ALKBH4. Interacts with KCNN4. Interacts (via GRAM domain) with RAB1B (in GDP-bound form); the interaction regulates MTMR6 recruitment to the endoplasmic reticulum-Golgi intermediate compartment. As to expression, expressed in CD4+ T-cells.

It is found in the cytoplasm. It localises to the endoplasmic reticulum-Golgi intermediate compartment. Its subcellular location is the endoplasmic reticulum. The protein resides in the cell projection. The protein localises to the ruffle membrane. It is found in the perinuclear region. The catalysed reaction is a 1,2-diacyl-sn-glycero-3-phospho-(1D-myo-inositol-3,5-bisphosphate) + H2O = a 1,2-diacyl-sn-glycero-3-phospho-(1D-myo-inositol-5-phosphate) + phosphate. It catalyses the reaction a 1,2-diacyl-sn-glycero-3-phospho-(1D-myo-inositol-3-phosphate) + H2O = a 1,2-diacyl-sn-glycero-3-phospho-(1D-myo-inositol) + phosphate. It carries out the reaction 1,2-dioctanoyl-sn-glycero-3-phospho-(1D-myo-inositol-3,5-bisphosphate) + H2O = 1,2-dioctanoyl-sn-glycero-3-phospho-(1D-myo-inositol-5-phosphate) + phosphate. The enzyme catalyses 1,2-dioctanoyl-sn-glycero-3-phospho-(1-D-myo-inositol-3-phosphate) + H2O = 1,2-dioctanoyl-sn-glycero-3-phospho-(1D-myo-inositol) + phosphate. Allosterically activated by phosphatidylserine and/or phosphatidylinositol 4-phosphate (PtdIns(4)P), and phosphatidylinositol 5-phosphate (PtdIns(5)P). Interaction with MTMR9 increases catalytic activity towards phosphatidylinositol 3,5-bisphosphate. In terms of biological role, lipid phosphatase that specifically dephosphorylates the D-3 position of phosphatidylinositol 3-phosphate and phosphatidylinositol 3,5-bisphosphate, generating phosphatidylinositol and phosphatidylinositol 5-phosphate. Binds with high affinity to phosphatidylinositol 3,5-bisphosphate (PtdIns(3,5)P2) but also to phosphatidylinositol 3-phosphate (PtdIns(3)P), phosphatidylinositol 4-phosphate (PtdIns(4)P), and phosphatidylinositol 5-phosphate (PtdIns(5)P), phosphatidic acid and phosphatidylserine. Negatively regulates ER-Golgi protein transport. Probably in association with MTMR9, plays a role in the late stages of macropinocytosis by dephosphorylating phosphatidylinositol 3-phosphate in membrane ruffles. Acts as a negative regulator of KCNN4/KCa3.1 channel activity in CD4(+) T-cells possibly by decreasing intracellular levels of phosphatidylinositol 3-phosphate. Negatively regulates proliferation of reactivated CD4(+) T-cells. In complex with MTMR9, negatively regulates DNA damage-induced apoptosis. The formation of the MTMR6-MTMR9 complex stabilizes both MTMR6 and MTMR9 protein levels. This chain is Phosphatidylinositol-3,5-bisphosphate 3-phosphatase MTMR6, found in Homo sapiens (Human).